Consider the following 111-residue polypeptide: Cytochrome c-550 (111 aa).

4 residues coordinate heme c: cysteine 13, cysteine 16, histidine 17, and methionine 90.

Binds 1 heme c group covalently per subunit.

The polypeptide is Cytochrome c-550 (Novispirillum itersonii (Aquaspirillum itersonii)).